A 249-amino-acid chain; its full sequence is Very-long-chain (3R)-3-hydroxyacyl-CoA dehydratase 1 (249 aa).

Residues 1 to 22 (MASSEEDGTNGGASEAGEEKEA) are disordered. The Cytoplasmic portion of the chain corresponds to 1-36 (MASSEEDGTNGGASEAGEEKEAPGRRRRLGLLATVW). The chain crosses the membrane as a helical span at residues 37–56 (LTFYNIAMTAGWLVLAIAMV). The Lumenal portion of the chain corresponds to 57 to 75 (RFYMEKGTHKGLYKSIQKT). The helical transmembrane segment at 76–92 (LKFFQTFALLEIVHCLI) threads the bilayer. Residues 93–102 (GIVPTSVIVA) lie on the Cytoplasmic side of the membrane. A helical transmembrane segment spans residues 103–120 (GVQVSSRIFMVWLITHSI). Residues 121 to 126 (KPIQNE) are Lumenal-facing. Residues 127–141 (ESVVLFLVAWTVTEI) form a helical membrane-spanning segment. Over 142-164 (TRYSFYTFSLLDHLPYFIKWARY) the chain is Cytoplasmic. A helical transmembrane segment spans residues 165 to 182 (NFFIILYPVGVVGELLTI). Catalysis depends on residues Tyr-171 and Glu-178. Over 183 to 212 (YAALPYVKKTGMFSIRLPNKYNVSFDYYYF) the chain is Lumenal. N-linked (GlcNAc...) asparagine glycosylation occurs at Asn-204. Residues 213–230 (LLITMASYIPLFPQLYFH) traverse the membrane as a helical segment. At 231–249 (MLRQRRKVLHGEVIVEKDD) the chain is on the cytoplasmic side.

This sequence belongs to the very long-chain fatty acids dehydratase HACD family. As to quaternary structure, may interact with enzymes of the ELO family (including ELOVL1); with those enzymes that mediate condensation, the first of the four steps of the reaction cycle responsible for fatty acids elongation, may be part of a larger fatty acids elongase complex. Interacts with TECR. In terms of tissue distribution, skeletal muscle.

The protein localises to the endoplasmic reticulum membrane. The enzyme catalyses a very-long-chain (3R)-3-hydroxyacyl-CoA = a very-long-chain (2E)-enoyl-CoA + H2O. It catalyses the reaction (3R)-hydroxyhexadecanoyl-CoA = (2E)-hexadecenoyl-CoA + H2O. It carries out the reaction (3R)-hydroxyoctadecanoyl-CoA = (2E)-octadecenoyl-CoA + H2O. The catalysed reaction is (3R)-hydroxyeicosanoyl-CoA = (2E)-eicosenoyl-CoA + H2O. The enzyme catalyses (3R)-hydroxydocosanoyl-CoA = (2E)-docosenoyl-CoA + H2O. It catalyses the reaction (3R)-hydroxytetracosanoyl-CoA = (2E)-tetracosenoyl-CoA + H2O. It carries out the reaction (3R)-hydroxyhexacosanoyl-CoA = (2E)-hexacosenoyl-CoA + H2O. The protein operates within lipid metabolism; fatty acid biosynthesis. Its function is as follows. Catalyzes the third of the four reactions of the long-chain fatty acids elongation cycle. This endoplasmic reticulum-bound enzymatic process, allows the addition of two carbons to the chain of long- and very long-chain fatty acids/VLCFAs per cycle. This enzyme catalyzes the dehydration of the 3-hydroxyacyl-CoA intermediate into trans-2,3-enoyl-CoA, within each cycle of fatty acid elongation. Thereby, it participates in the production of VLCFAs of different chain lengths that are involved in multiple biological processes as precursors of membrane lipids and lipid mediators. In Canis lupus familiaris (Dog), this protein is Very-long-chain (3R)-3-hydroxyacyl-CoA dehydratase 1 (HACD1).